We begin with the raw amino-acid sequence, 336 residues long: Dihydroorotate dehydrogenase (quinone) (336 aa).

Residues 62–66 and T86 each bind FMN; that span reads AGLDK. K66 lines the substrate pocket. 111 to 115 provides a ligand contact to substrate; the sequence is NRMGF. 2 residues coordinate FMN: N139 and N172. N172 is a substrate binding site. S175 acts as the Nucleophile in catalysis. N177 lines the substrate pocket. Residues K217 and T245 each coordinate FMN. 246–247 provides a ligand contact to substrate; that stretch reads NT. FMN contacts are provided by residues G268, G297, and 318 to 319; that span reads YS.

The protein belongs to the dihydroorotate dehydrogenase family. Type 2 subfamily. As to quaternary structure, monomer. It depends on FMN as a cofactor.

It is found in the cell membrane. The catalysed reaction is (S)-dihydroorotate + a quinone = orotate + a quinol. The protein operates within pyrimidine metabolism; UMP biosynthesis via de novo pathway; orotate from (S)-dihydroorotate (quinone route): step 1/1. Catalyzes the conversion of dihydroorotate to orotate with quinone as electron acceptor. The protein is Dihydroorotate dehydrogenase (quinone) of Baumannia cicadellinicola subsp. Homalodisca coagulata.